The primary structure comprises 1622 residues: Transient receptor potential cation channel subfamily M member 1 (1622 aa).

Disordered stretches follow at residues 1–25 (MGSM…GSQK), 64–95 (PPLP…KHTQ), 450–490 (LAPP…EVEE), 618–641 (LGME…EEEI), and 822–856 (SKEN…HKKQ). Residues 1–875 (MGSMRKMSSS…CEFYNAPIVK (875 aa)) are Cytoplasmic-facing. Over residues 8 to 25 (SSSFKRGSIKSSTSGSQK) the composition is skewed to low complexity. The span at 70-95 (APSTTGEDTKQADTQSGKWSVSKHTQ) shows a compositional bias: polar residues. Positions 472–483 (GRGKGKGKKKGK) are enriched in basic residues. Composition is skewed to basic and acidic residues over residues 823 to 832 (KENEDGKEKE) and 843 to 853 (GSRKGDEENEH). Residues 876–896 (FWFYTISYLGYLLLFNYVILV) traverse the membrane as a helical segment. Over 897–942 (RMDGWPSPQEWIVISYIVSLALEKIREILMSEPGKLSQKIKVWLQE) the chain is Extracellular. The helical transmembrane segment at 943–963 (YWNITDLVAISMFMVGAILRL) threads the bilayer. The Cytoplasmic segment spans residues 964–973 (QSQPYMGYGR). Residues 974–994 (VIYCVDIILWYIRVLDIFGVN) form a helical membrane-spanning segment. Topologically, residues 995-1006 (KYLGPYVMMIGK) are extracellular. A helical membrane pass occupies residues 1007 to 1027 (MMIDMLYFVVIMLVVLMSFGV). The Cytoplasmic portion of the chain corresponds to 1028–1099 (ARQAILHPEE…CIPGAWLTPA (72 aa)). Residues 1100–1120 (LMACYLLVANILLVNLLIAVF) traverse the membrane as a helical segment. N1121 is a glycosylation site (N-linked (GlcNAc...) asparagine). Residues 1121-1150 (NNTFFEVKSISNQVWKFQRYQLIMTFHDRP) are Extracellular-facing. The chain crosses the membrane as a helical span at residues 1151 to 1171 (VLPPPMIILSHIYIIIMRLSG). At 1172–1622 (RCRKKREGDQ…QEKRSAETEC (451 aa)) the chain is on the cytoplasmic side. Residues 1224–1252 (DERIRVTSERVENMSMRLEEINERENFMK) adopt a coiled-coil conformation. 3 disordered regions span residues 1354 to 1383 (EDAK…RSRL), 1389 to 1408 (LSTE…EFDP), and 1567 to 1622 (CLRS…ETEC). The span at 1613-1622 (QEKRSAETEC) shows a compositional bias: basic and acidic residues.

It belongs to the transient receptor (TC 1.A.4) family. LTrpC subfamily. TRPM1 sub-subfamily. In terms of assembly, homodimer. Interacts with TRPM3; the interaction results in the formation of a heteromultimeric cation channel complex that are functionally different from the homomeric channels. Interacts with GPR179. Associates with both guanine nucleotide-binding proteins G(o) and beta-gamma G protein dimer; implicated in directly regulating TRPM1 channel open-state. Expressed in the retina where it localizes on dendritic tips of ON bipolar cells. Specifically, it is expressed in retinal bipolar cells (BPCs) of the ON subtype. Not detected in brain, lung, liver, heart, kidney, spleen or small intestine. Also expressed at high levels in poorly metastatic variants of B16 melanoma and at much reduced levels in highly metastatic variants of B16 melanoma.

The protein resides in the cell membrane. Its subcellular location is the endoplasmic reticulum membrane. It is found in the cell projection. The protein localises to the axon. The enzyme catalyses Ca(2+)(in) = Ca(2+)(out). It carries out the reaction Mg(2+)(in) = Mg(2+)(out). It catalyses the reaction Mn(2+)(in) = Mn(2+)(out). The catalysed reaction is Ni(2+)(in) = Ni(2+)(out). With respect to regulation, inhibited by extracellular zinc ions. Inhibited by intracellular Mg(2+). Activated by the neuroactive steroid pregnenolone sulfate. Negatively regulated by activation of GRM6 receptors in the ON-bipolar cells. Its function is as follows. Constitutively open nonselective divalent cation-conducting channels which mediate the influx of Ca(2+), Mg(2+), Mn(2+), Ba(2+), and Ni(2+) into the cytoplasm, leading to membrane depolarization. Impermeable to zinc ions. In addition, forms heteromultimeric ion channels with TRPM3 which are permeable for calcium and zinc ions. Plays an essential role for the depolarizing photoresponse of retinal ON bipolar cells. In the dark, tonic release of glutamate activates the G-protein coupled receptor for glutamate (GRM6), its activation induces the release of G(o) and the beta-gamma G protein dimer. Both subunits can interact and inactivate the TRPM1 channel. A light onset, induces decrease in glutamate release and deactivation of GRM6 leading to channel opening and membrane depolarization. May play a role in metastasis suppression. The sequence is that of Transient receptor potential cation channel subfamily M member 1 from Mus musculus (Mouse).